The primary structure comprises 365 residues: Peptide chain release factor 2 (365 aa).

Q252 bears the N5-methylglutamine mark.

The protein belongs to the prokaryotic/mitochondrial release factor family. In terms of processing, methylated by PrmC. Methylation increases the termination efficiency of RF2.

It localises to the cytoplasm. Functionally, peptide chain release factor 2 directs the termination of translation in response to the peptide chain termination codons UGA and UAA. The chain is Peptide chain release factor 2 from Shewanella woodyi (strain ATCC 51908 / MS32).